A 497-amino-acid polypeptide reads, in one-letter code: D-gluconate dehydratase (497 aa).

Residue E303 coordinates Mg(2+). The Proton donor role is filled by H305. Mg(2+)-binding residues include E329 and E355. Residue H405 is the Proton acceptor of the active site.

This sequence belongs to the mandelate racemase/muconate lactonizing enzyme family. GaD subfamily. Mg(2+) is required as a cofactor.

It carries out the reaction D-gluconate = 2-dehydro-3-deoxy-D-gluconate + H2O. It functions in the pathway carbohydrate acid metabolism; D-gluconate degradation. Functionally, involved in the degradation of glucose via the Entner-Doudoroff pathway. Catalyzes the dehydration of gluconate to produce 2-keto-3-deoxygluconate (KDG). It is not able to use D-galactonate as substrate. The polypeptide is D-gluconate dehydratase (gad) (Thermoproteus tenax).